A 554-amino-acid polypeptide reads, in one-letter code: Hyaluronan synthase 3 (554 aa).

The Cytoplasmic portion of the chain corresponds to 1–15 (MPVQLTTALRVVGTS). The chain crosses the membrane as a helical span at residues 16–36 (LFALVVLGGILAAYVTGYQFI). At 37–44 (HTEKHYLS) the chain is on the extracellular side. Residues 45–65 (FGLYGAILGLHLLIQSLFAFL) form a helical membrane-spanning segment. At 66–378 (EHRRMRRAGR…NSLWFHKHHL (313 aa)) the chain is on the cytoplasmic side. Residues 379–399 (WMTYESVVTGFFPFFLIATVI) traverse the membrane as a helical segment. Residues 400–409 (QLFYRGRIWN) lie on the Extracellular side of the membrane. A helical transmembrane segment spans residues 410 to 430 (ILLFLLTVQLVGIIKATYACF). Residues 431–441 (LRGNAEMIFMS) lie on the Cytoplasmic side of the membrane. The helical transmembrane segment at 442–462 (LYSLLYMSSLLPAKIFAIATI) threads the bilayer. The N-linked (GlcNAc...) asparagine glycan is linked to Asn463. Residues 463-474 (NKSGWGTSGRKT) lie on the Extracellular side of the membrane. The chain crosses the membrane as a helical span at residues 475-495 (IVVNFIGLIPVSIWVAVLLGG). The Cytoplasmic segment spans residues 496–516 (LAYTAYCQDLFSETELAFLVS). A helical membrane pass occupies residues 517–537 (GAILYGCYWVALLMLYLAIIA). Residues 538-554 (RRCGKKPEQYSLAFAEV) are Extracellular-facing.

This sequence belongs to the NodC/HAS family. Mg(2+) serves as cofactor. O-GlcNAcylation increases the hyaluronan synthase activity, HAS3 stability and its plasma membrane residence. The concentration of UDP-GlcNAc controls the level of O-GlcNAc modification.

The protein localises to the cell membrane. It localises to the golgi apparatus membrane. It is found in the golgi apparatus. The protein resides in the trans-Golgi network membrane. Its subcellular location is the cytoplasmic vesicle. It carries out the reaction [hyaluronan](n) + UDP-N-acetyl-alpha-D-glucosamine = N-acetyl-beta-D-glucosaminyl-(1-&gt;4)-[hyaluronan](n) + UDP + H(+). It catalyses the reaction N-acetyl-beta-D-glucosaminyl-(1-&gt;4)-[hyaluronan](n) + UDP-alpha-D-glucuronate = [hyaluronan](n+1) + UDP + H(+). The protein operates within glycan biosynthesis; hyaluronan biosynthesis. Its function is as follows. Catalyzes the addition of GlcNAc or GlcUA monosaccharides to the nascent hyaluronan polymer. Therefore, it is essential to hyaluronan synthesis a major component of most extracellular matrices that has a structural role in tissues architectures and regulates cell adhesion, migration and differentiation. This is one of three isoenzymes responsible for cellular hyaluronan synthesis. The protein is Hyaluronan synthase 3 (Has3) of Mus musculus (Mouse).